The following is a 186-amino-acid chain: Acireductone dioxygenase (186 aa).

Fe(2+) contacts are provided by histidine 89, histidine 91, glutamate 95, and histidine 134. The Ni(2+) site is built by histidine 89, histidine 91, glutamate 95, and histidine 134.

Belongs to the acireductone dioxygenase (ARD) family. Fe(2+) is required as a cofactor. The cofactor is Ni(2+).

The protein resides in the cytoplasm. It is found in the nucleus. It catalyses the reaction 1,2-dihydroxy-5-(methylsulfanyl)pent-1-en-3-one + O2 = 4-methylsulfanyl-2-oxobutanoate + formate + 2 H(+). The catalysed reaction is 1,2-dihydroxy-5-(methylsulfanyl)pent-1-en-3-one + O2 = 3-(methylsulfanyl)propanoate + CO + formate + 2 H(+). Its pathway is amino-acid biosynthesis; L-methionine biosynthesis via salvage pathway; L-methionine from S-methyl-5-thio-alpha-D-ribose 1-phosphate: step 5/6. In terms of biological role, catalyzes 2 different reactions between oxygen and the acireductone 1,2-dihydroxy-3-keto-5-methylthiopentene (DHK-MTPene) depending upon the metal bound in the active site. Fe-containing acireductone dioxygenase (Fe-ARD) produces formate and 2-keto-4-methylthiobutyrate (KMTB), the alpha-ketoacid precursor of methionine in the methionine recycle pathway. Ni-containing acireductone dioxygenase (Ni-ARD) produces methylthiopropionate, carbon monoxide and formate, and does not lie on the methionine recycle pathway. The sequence is that of Acireductone dioxygenase from Drosophila melanogaster (Fruit fly).